The chain runs to 308 residues: Mitochondrial import receptor subunit TOM40B (308 aa).

The segment at Met1–Ser29 is disordered. Residues Pro281–Gly308 are required for mitochondrial targeting.

It belongs to the Tom40 family. Forms part of the preprotein translocase of the outer mitochondrial membrane (TOM complex) containing TOMM22, TOMM40, TOMM40L and TOMM70. Interacts with mitochondrial targeting sequences.

It is found in the mitochondrion outer membrane. Functionally, potential channel-forming protein implicated in import of protein precursors into mitochondria. This is Mitochondrial import receptor subunit TOM40B (Tomm40l) from Mus musculus (Mouse).